A 342-amino-acid chain; its full sequence is Oxygen-dependent coproporphyrinogen-III oxidase (342 aa).

Ser98 contributes to the substrate binding site. A divalent metal cation contacts are provided by His102 and His112. Residue His112 is the Proton donor of the active site. Substrate is bound at residue 114–116 (NYR). A divalent metal cation is bound by residues His146 and His176. Positions 266 to 301 (YVEFNLVWDRGTIFGLQTNGRTESILMSLPPLARWE) are important for dimerization.

The protein belongs to the aerobic coproporphyrinogen-III oxidase family. In terms of assembly, homodimer. A divalent metal cation serves as cofactor.

It localises to the cytoplasm. It catalyses the reaction coproporphyrinogen III + O2 + 2 H(+) = protoporphyrinogen IX + 2 CO2 + 2 H2O. It functions in the pathway porphyrin-containing compound metabolism; protoporphyrin-IX biosynthesis; protoporphyrinogen-IX from coproporphyrinogen-III (O2 route): step 1/1. Its function is as follows. Involved in the heme and chlorophyll biosynthesis. Catalyzes the aerobic oxidative decarboxylation of propionate groups of rings A and B of coproporphyrinogen-III to yield the vinyl groups in protoporphyrinogen-IX. This is Oxygen-dependent coproporphyrinogen-III oxidase from Prochlorococcus marinus (strain AS9601).